We begin with the raw amino-acid sequence, 280 residues long: DegV domain-containing protein TTE1491 (280 aa).

Positions 4–279 (IAIVTDSLSD…PDAAGVFFEE (276 aa)) constitute a DegV domain. Positions 61 and 93 each coordinate hexadecanoate.

In terms of biological role, may bind long-chain fatty acids, such as palmitate, and may play a role in lipid transport or fatty acid metabolism. In Caldanaerobacter subterraneus subsp. tengcongensis (strain DSM 15242 / JCM 11007 / NBRC 100824 / MB4) (Thermoanaerobacter tengcongensis), this protein is DegV domain-containing protein TTE1491.